Consider the following 266-residue polypeptide: Apolipoprotein A-I (266 aa).

The N-terminal stretch at 1-18 is a signal peptide; that stretch reads MKAVVLTLAVLFLTGSQA. 2 consecutive repeat copies span residues 67-88 and 89-110. Positions 67-266 are 10 X approximate tandem repeats; the sequence is LKLLDNWDSL…DEATKKLNAQ (200 aa). Position 109 is a methionine sulfoxide (methionine 109). The 3; half-length repeat unit spans residues 111 to 121; the sequence is KDLEEVKKKVQ. Tandem repeats lie at residues 122 to 143, 144 to 165, 166 to 187, 188 to 209, and 210 to 231. A 9; half-length repeat occupies 232–242; it reads PALEDLRQGLM. Repeat 10 spans residues 243-266; the sequence is PVLESFRASLLAAVDEATKKLNAQ.

It belongs to the apolipoprotein A1/A4/E family. Homodimer. Interacts with APOA1BP and CLU. Component of a sperm activating protein complex (SPAP), consisting of APOA1, an immunoglobulin heavy chain, an immunoglobulin light chain and albumin. Interacts with NDRG1. Interacts with SCGB3A2. Interacts with NAXE and YJEFN3. Post-translationally, glycosylated. In terms of processing, palmitoylated. Phosphorylation sites are present in the extracellular medium.

It localises to the secreted. Its function is as follows. Participates in the reverse transport of cholesterol from tissues to the liver for excretion by promoting cholesterol efflux from tissues and by acting as a cofactor for the lecithin cholesterol acyltransferase (LCAT). As part of the SPAP complex, activates spermatozoa motility. The sequence is that of Apolipoprotein A-I (APOA1) from Phoca vitulina (Harbor seal).